We begin with the raw amino-acid sequence, 250 residues long: tRNA (guanine-N(7)-)-methyltransferase (250 aa).

The span at Met-1–Ser-10 shows a compositional bias: basic and acidic residues. The disordered stretch occupies residues Met-1–Phe-30. Low complexity predominate over residues Asp-11–Arg-24. 4 residues coordinate S-adenosyl-L-methionine: Glu-79, Glu-104, Asp-131, and Asp-153. Asp-153 is an active-site residue. Substrate contacts are provided by Lys-157 and Asp-189.

Belongs to the class I-like SAM-binding methyltransferase superfamily. TrmB family.

The enzyme catalyses guanosine(46) in tRNA + S-adenosyl-L-methionine = N(7)-methylguanosine(46) in tRNA + S-adenosyl-L-homocysteine. Its pathway is tRNA modification; N(7)-methylguanine-tRNA biosynthesis. Functionally, catalyzes the formation of N(7)-methylguanine at position 46 (m7G46) in tRNA. The protein is tRNA (guanine-N(7)-)-methyltransferase of Rhodopseudomonas palustris (strain BisA53).